The chain runs to 133 residues: Small ribosomal subunit protein uS9 (133 aa).

Residues 102 to 113 (KVEGYLSRDPRA) are compositionally biased toward basic and acidic residues. A disordered region spans residues 102 to 133 (KVEGYLSRDPRAKERRKYGLKKARKAPQFSKR). Basic residues predominate over residues 114 to 133 (KERRKYGLKKARKAPQFSKR).

Belongs to the universal ribosomal protein uS9 family.

The sequence is that of Small ribosomal subunit protein uS9 from Gloeobacter violaceus (strain ATCC 29082 / PCC 7421).